Consider the following 744-residue polypeptide: Endonuclease MutS2 (744 aa).

315–322 (GPNMGGKT) provides a ligand contact to ATP. Positions 668–743 (VDLRGLTVAE…GHGVTVVALR (76 aa)) constitute a Smr domain.

It belongs to the DNA mismatch repair MutS family. MutS2 subfamily. Homodimer. Interacts with MutL. Binds to stalled ribosomes, contacting rRNA.

Nuclease activity is stimulated by interaction with MutL. ATPase activity is stimulated by dsDNA. Functionally, endonuclease that is involved in the suppression of homologous recombination and may thus have a key role in the control of bacterial genetic diversity. Cleaves the phosphate backbone of oligodeoxynucleotides non-sequence-specifically at the 3' side of the phosphates. Preferably incises the branched DNA structures, especially the D-loop structure over the Holliday junction. Has ATPase activity. Binds to dsDNA but not to ssDNA. Its function is as follows. Acts as a ribosome collision sensor, splitting the ribosome into its 2 subunits. Detects stalled/collided 70S ribosomes which it binds and splits by an ATP-hydrolysis driven conformational change. Acts upstream of the ribosome quality control system (RQC), a ribosome-associated complex that mediates the extraction of incompletely synthesized nascent chains from stalled ribosomes and their subsequent degradation. Probably generates substrates for RQC. This is Endonuclease MutS2 from Thermus thermophilus (strain ATCC 27634 / DSM 579 / HB8).